The sequence spans 114 residues: Probable 4-amino-4-deoxy-L-arabinose-phosphoundecaprenol flippase subunit ArnE (114 aa).

The next 3 membrane-spanning stretches (helical) occupy residues leucine 38–leucine 58, leucine 64–alanine 84, and leucine 94–leucine 114. In terms of domain architecture, EamA spans leucine 43–tryptophan 112.

It belongs to the ArnE family. In terms of assembly, heterodimer of ArnE and ArnF.

It localises to the cell inner membrane. The protein operates within bacterial outer membrane biogenesis; lipopolysaccharide biosynthesis. Its function is as follows. Translocates 4-amino-4-deoxy-L-arabinose-phosphoundecaprenol (alpha-L-Ara4N-phosphoundecaprenol) from the cytoplasmic to the periplasmic side of the inner membrane. This is Probable 4-amino-4-deoxy-L-arabinose-phosphoundecaprenol flippase subunit ArnE from Yersinia pseudotuberculosis serotype O:3 (strain YPIII).